A 531-amino-acid polypeptide reads, in one-letter code: SWI/SNF-related matrix-associated actin-dependent regulator of chromatin subfamily D member 2 (531 aa).

Asymmetric dimethylarginine occurs at positions 81 and 104. A Phosphoserine modification is found at S203. Residues 205–227 (SKAEGDTAGTTGTPGGTPAGDKV) form a disordered region. T217 is modified (phosphothreonine). A Glycyl lysine isopeptide (Lys-Gly) (interchain with G-Cter in SUMO2) cross-link involves residue K226. Residues 306–383 (HQPPQYKLDP…PMKLAGLLQH (78 aa)) form the SWIB/MDM2 domain.

This sequence belongs to the SMARCD family. As to quaternary structure, component of the multiprotein chromatin-remodeling complexes SWI/SNF: SWI/SNF-A (BAF), SWI/SNF-B (PBAF) and related complexes. The canonical complex contains a catalytic subunit (either SMARCA4/BRG1/BAF190A or SMARCA2/BRM/BAF190B), and at least SMARCE1, ACTL6A/BAF53, SMARCC1/BAF155, SMARCC2/BAF170, and SMARCB1/SNF5/BAF47. Other subunits specific to each of the complexes may also be present permitting several possible combinations developmentally and tissue specific. Component of the BAF complex, which includes at least actin (ACTB), ARID1A/BAF250A, ARID1B/BAF250B, SMARCA2/BRM, SMARCA4/BRG1, ACTL6A/BAF53, ACTL6B/BAF53B, SMARCE1/BAF57, SMARCC1/BAF155, SMARCC2/BAF170, SMARCB1/SNF5/INI1, and one or more SMARCD1/BAF60A, SMARCD2/BAF60B, or SMARCD3/BAF60C. In muscle cells, the BAF complex also contains DPF3. Component of the SWI/SNF-B (PBAF) chromatin remodeling complex, at least composed of SMARCA4/BRG1, SMARCB1/BAF47/SNF5, ACTL6A/BAF53A or ACTL6B/BAF53B, SMARCE1/BAF57, SMARCD1/BAF60A, SMARCD2/BAF60B, perhaps SMARCD3/BAF60C, SMARCC1/BAF155, SMARCC2/BAF170, PBRM1/BAF180, ARID2/BAF200 and actin (ACTB). Interacts with UNKL. Interacts with CEBPE. In terms of processing, ubiquitinated through a signaling process involving RAC1 and the RING finger protein UNKL.

It localises to the nucleus. Its function is as follows. Involved in transcriptional activation and repression of select genes by chromatin remodeling (alteration of DNA-nucleosome topology). Component of SWI/SNF chromatin remodeling complexes that carry out key enzymatic activities, changing chromatin structure by altering DNA-histone contacts within a nucleosome in an ATP-dependent manner. Critical regulator of myeloid differentiation, controlling granulocytopoiesis and the expression of genes involved in neutrophil granule formation. This is SWI/SNF-related matrix-associated actin-dependent regulator of chromatin subfamily D member 2 (SMARCD2) from Bos taurus (Bovine).